A 193-amino-acid polypeptide reads, in one-letter code: Segregation and condensation protein B (193 aa).

Belongs to the ScpB family. In terms of assembly, homodimer. Homodimerization may be required to stabilize the binding of ScpA to the Smc head domains. Component of a cohesin-like complex composed of ScpA, ScpB and the Smc homodimer, in which ScpA and ScpB bind to the head domain of Smc. The presence of the three proteins is required for the association of the complex with DNA.

The protein resides in the cytoplasm. Its function is as follows. Participates in chromosomal partition during cell division. May act via the formation of a condensin-like complex containing Smc and ScpA that pull DNA away from mid-cell into both cell halves. This chain is Segregation and condensation protein B, found in Clostridium botulinum (strain 657 / Type Ba4).